The sequence spans 729 residues: uncharacterized protein (729 aa).

This sequence belongs to the mimivirus L515/L516 family.

The protein localises to the virion. This is an uncharacterized protein from Acanthamoeba polyphaga mimivirus (APMV).